A 364-amino-acid chain; its full sequence is Alanine racemase (364 aa).

The active-site Proton acceptor; specific for D-alanine is K35. Position 35 is an N6-(pyridoxal phosphate)lysine (K35). R136 contributes to the substrate binding site. Y261 acts as the Proton acceptor; specific for L-alanine in catalysis. M309 serves as a coordination point for substrate.

This sequence belongs to the alanine racemase family. Requires pyridoxal 5'-phosphate as cofactor.

The catalysed reaction is L-alanine = D-alanine. It functions in the pathway amino-acid biosynthesis; D-alanine biosynthesis; D-alanine from L-alanine: step 1/1. Catalyzes the interconversion of L-alanine and D-alanine. May also act on other amino acids. In Shewanella amazonensis (strain ATCC BAA-1098 / SB2B), this protein is Alanine racemase (alr).